The sequence spans 118 residues: Histone H2B.N (118 aa).

The protein belongs to the histone H2B family. The nucleosome is a histone octamer containing two molecules each of H2A, H2B, H3 and H4 assembled in one H3-H4 heterotetramer and two H2A-H2B heterodimers. The octamer wraps approximately 147 bp of DNA. Expressed in germline. Predominantly expressed in oocytes.

It is found in the nucleus. Its subcellular location is the chromosome. Core component of nucleosome. Nucleosomes wrap and compact DNA into chromatin, limiting DNA accessibility to the cellular machineries which require DNA as a template. Histones thereby play a central role in transcription regulation, DNA repair, DNA replication and chromosomal stability. DNA accessibility is regulated via a complex set of post-translational modifications of histones, also called histone code, and nucleosome remodeling. The polypeptide is Histone H2B.N (Homo sapiens (Human)).